The chain runs to 701 residues: Elongation factor G (701 aa).

Residues 11–287 (TKVRNIGIMA…AVIDYLPSPL (277 aa)) form the tr-type G domain. Residues 20 to 27 (AHIDAGKT), 84 to 88 (DTPGH), and 138 to 141 (NKMD) contribute to the GTP site.

It belongs to the TRAFAC class translation factor GTPase superfamily. Classic translation factor GTPase family. EF-G/EF-2 subfamily.

Its subcellular location is the cytoplasm. Its function is as follows. Catalyzes the GTP-dependent ribosomal translocation step during translation elongation. During this step, the ribosome changes from the pre-translocational (PRE) to the post-translocational (POST) state as the newly formed A-site-bound peptidyl-tRNA and P-site-bound deacylated tRNA move to the P and E sites, respectively. Catalyzes the coordinated movement of the two tRNA molecules, the mRNA and conformational changes in the ribosome. This chain is Elongation factor G, found in Mycobacterium leprae (strain Br4923).